The chain runs to 297 residues: Phosphatidylinositol N-acetylglucosaminyltransferase subunit C (297 aa).

A run of 8 helical transmembrane segments spans residues 51-71, 80-100, 117-137, 153-173, 174-194, 196-216, 227-244, and 250-270; these read VVFE…FVVI, LAPH…YVLF, WADL…SPVL, SVFM…AAIV, SSTL…SRLP, SLHA…WPML, SYVG…GGLL, and GAVL…FYLI.

Belongs to the PIGC family. As to quaternary structure, component of the glycosylphosphatidylinositol-N-acetylglucosaminyltransferase (GPI-GnT) complex composed at least by PIGA, PIGC, PIGH, PIGP, PIGQ, PIGY and DPM2. Interacts with PIGQ. Interacts with the heterodimer PIGA:PIGH.

Its subcellular location is the endoplasmic reticulum membrane. Its pathway is glycolipid biosynthesis; glycosylphosphatidylinositol-anchor biosynthesis. Functionally, part of the glycosylphosphatidylinositol-N-acetylglucosaminyltransferase (GPI-GnT) complex that catalyzes the transfer of N-acetylglucosamine from UDP-N-acetylglucosamine to phosphatidylinositol and participates in the first step of GPI biosynthesis. This is Phosphatidylinositol N-acetylglucosaminyltransferase subunit C from Homo sapiens (Human).